The primary structure comprises 665 residues: GTPase IMAP family member 8 (665 aa).

The AIG1-type G 1 domain maps to 8–210 (MSELRLLLLG…HVNFKTEGSR (203 aa)). The interval 17–24 (GKCRSGKS) is G1. GTP contacts are provided by residues 17–25 (GKCRSGKSA) and Ser-38. Residues 44–48 (TVIKM) are G2. A G3 region spans residues 65–68 (DTPD). The tract at residues 134-137 (TRKD) is G4. GTP-binding positions include 135 to 137 (RKD) and Asn-170. Positions 169 to 171 (NNK) are G5. Residues 217–246 (EAASQEGDKPQGPRERQLQSTGPEQNPGTS) are disordered. Basic and acidic residues predominate over residues 222–233 (EGDKPQGPRERQ). The span at 234–246 (LQSTGPEQNPGTS) shows a compositional bias: polar residues. AIG1-type G domains are found at residues 245–435 (TSEL…VFRE) and 436–644 (KETL…SKLI). Coiled coils occupy residues 400 to 427 (NYRATGEEEQRQADELLEKIESMVHQNG) and 608 to 657 (QAQE…EKLL).

Belongs to the TRAFAC class TrmE-Era-EngA-EngB-Septin-like GTPase superfamily. AIG1/Toc34/Toc159-like paraseptin GTPase family. IAN subfamily. In terms of tissue distribution, expressed in the spleen, intestine, liver, and colon, as well as in lung, placenta, kidney, muscle, and heart. Extremely low expression, if any, in brain, in thymus, bone marrow, and blood leukocytes. Detected in T-cells.

It localises to the endoplasmic reticulum. Its subcellular location is the golgi apparatus. The protein resides in the mitochondrion. It is found in the cytoplasm. The protein localises to the cytosol. Its function is as follows. Exerts an anti-apoptotic effect in the immune system and is involved in responses to infections. The protein is GTPase IMAP family member 8 (GIMAP8) of Homo sapiens (Human).